A 932-amino-acid polypeptide reads, in one-letter code: Isoleucine--tRNA ligase (932 aa).

The 'HIGH' region motif lies at 57 to 67 (PYANGDIHIGT). Position 559 (Glu-559) interacts with L-isoleucyl-5'-AMP. A 'KMSKS' region motif is present at residues 600–604 (KMSKS). Lys-603 serves as a coordination point for ATP. Cys-899, Cys-902, Cys-919, and Cys-922 together coordinate Zn(2+).

It belongs to the class-I aminoacyl-tRNA synthetase family. IleS type 1 subfamily. In terms of assembly, monomer. Requires Zn(2+) as cofactor.

The protein resides in the cytoplasm. The enzyme catalyses tRNA(Ile) + L-isoleucine + ATP = L-isoleucyl-tRNA(Ile) + AMP + diphosphate. Its function is as follows. Catalyzes the attachment of isoleucine to tRNA(Ile). As IleRS can inadvertently accommodate and process structurally similar amino acids such as valine, to avoid such errors it has two additional distinct tRNA(Ile)-dependent editing activities. One activity is designated as 'pretransfer' editing and involves the hydrolysis of activated Val-AMP. The other activity is designated 'posttransfer' editing and involves deacylation of mischarged Val-tRNA(Ile). The sequence is that of Isoleucine--tRNA ligase from Thermoanaerobacter pseudethanolicus (strain ATCC 33223 / 39E) (Clostridium thermohydrosulfuricum).